The sequence spans 253 residues: 3-dehydroquinate dehydratase (253 aa).

3-dehydroquinate is bound by residues 46 to 48 (EWR) and arginine 82. The Proton donor/acceptor role is filled by histidine 143. Lysine 170 serves as the catalytic Schiff-base intermediate with substrate. 3 residues coordinate 3-dehydroquinate: arginine 213, serine 232, and glutamine 236.

Belongs to the type-I 3-dehydroquinase family. Homodimer.

The catalysed reaction is 3-dehydroquinate = 3-dehydroshikimate + H2O. Its pathway is metabolic intermediate biosynthesis; chorismate biosynthesis; chorismate from D-erythrose 4-phosphate and phosphoenolpyruvate: step 3/7. Its function is as follows. Involved in the third step of the chorismate pathway, which leads to the biosynthesis of aromatic amino acids. Catalyzes the cis-dehydration of 3-dehydroquinate (DHQ) and introduces the first double bond of the aromatic ring to yield 3-dehydroshikimate. This Syntrophotalea carbinolica (strain DSM 2380 / NBRC 103641 / GraBd1) (Pelobacter carbinolicus) protein is 3-dehydroquinate dehydratase.